We begin with the raw amino-acid sequence, 393 residues long: Eukaryotic translation initiation factor 5 (393 aa).

GTP is bound at residue Gly-28 to Thr-35. Disordered stretches follow at residues Lys-144 to Asp-179 and Glu-217 to Ser-247. The region spanning Glu-223–Glu-385 is the W2 domain. The span at Glu-224–Glu-233 shows a compositional bias: acidic residues.

This sequence belongs to the eIF-2-beta/eIF-5 family.

Catalyzes the hydrolysis of GTP bound to the 40S ribosomal initiation complex (40S.mRNA.Met-tRNA[F].eIF-2.GTP) with the subsequent joining of a 60S ribosomal subunit resulting in the release of eIF-2 and the guanine nucleotide. The subsequent joining of a 60S ribosomal subunit results in the formation of a functional 80S initiation complex (80S.mRNA.Met-tRNA[F]). This chain is Eukaryotic translation initiation factor 5 (eif5), found in Dictyostelium discoideum (Social amoeba).